Consider the following 319-residue polypeptide: Ninja-family protein AFP4 (319 aa).

Residues 39–54 (DSEHGENQQEAKKRED) show a composition bias toward basic and acidic residues. Disordered stretches follow at residues 39-63 (DSEH…EKDV), 99-120 (FVFD…IVGR), and 205-228 (VTGP…NVEN).

The protein belongs to the Ninja family. As to quaternary structure, interacts with ABI5/DPBF1, AREB3/DPBF3, EEL/DPBF4, ABF1 and ABF3/DPBF5. As to expression, predominantly expressed in roots and seedlings.

The protein localises to the nucleus. In terms of biological role, acts as a negative regulator of abscisic acid (ABA) and salinity responses. The polypeptide is Ninja-family protein AFP4 (AFP4) (Arabidopsis thaliana (Mouse-ear cress)).